Consider the following 263-residue polypeptide: Small ribosomal subunit protein eS4 (263 aa).

An S4 RNA-binding domain is found at 42-104; that stretch reads LPLIIFLRNR…TGEHFRLVYD (63 aa).

This sequence belongs to the eukaryotic ribosomal protein eS4 family. In terms of assembly, component of the small ribosomal subunit.

The protein resides in the cytoplasm. Its function is as follows. Component of the small ribosomal subunit. The ribosome is a large ribonucleoprotein complex responsible for the synthesis of proteins in the cell. This Xenopus tropicalis (Western clawed frog) protein is Small ribosomal subunit protein eS4 (rps4).